We begin with the raw amino-acid sequence, 593 residues long: Epidermal growth factor receptor kinase substrate 8-like protein 3 (593 aa).

One can recognise a PTB domain in the interval 28-155 (QHRVEHLMTC…ALEEELEQRP (128 aa)). Disordered regions lie at residues 149–171 (EELEQRPRLGGLQPGQDRWRGPA), 184–239 (LEPG…ERDE), and 374–451 (ADWT…PAQP). Position 231 is a phosphoserine (serine 231). Residues 386 to 401 (PTFSDDWQLPEPSSQA) show a composition bias toward polar residues. Positions 425–435 (PQEKTHNHDPQ) are enriched in basic and acidic residues. The SH3 domain occupies 450 to 509 (QPALKMQVLYEFEARNPRELTVVQGEKLEVLDHSKRWWLVKNEAGRSGYIPSNILEPLQP).

This sequence belongs to the EPS8 family. As to quaternary structure, interacts with ABI1. Part of a complex that contains SOS1, ABI1 and EPS8L2. Interacts with FASLG.

Its subcellular location is the cytoplasm. In Homo sapiens (Human), this protein is Epidermal growth factor receptor kinase substrate 8-like protein 3 (EPS8L3).